The chain runs to 253 residues: Blue-light photoreceptor (253 aa).

Residues 6 to 79 (KFDVILKALN…AKIRHAINEK (74 aa)) enclose the PAS domain. The residue at position 56 (C56) is an S-4a-FMN cysteine. The region spanning 80–133 (STANVLLKNYRKNGTSFMNELTIEPIYDDNDHLYFVGIQKDVTTEHNYQLELEK) is the PAC domain. One can recognise an STAS domain in the interval 142-253 (STPIVPIKEN…STIKEALQFY (112 aa)).

In terms of processing, FMN binds covalently to cysteine after exposure to blue light and this bond is spontaneously broken in the dark.

Functionally, exhibits the same spectroscopical features and blue-light induced photochemistry as plants phototropins, with the reversible formation of a blue-shifted photoproduct, assigned to an FMN-cysteine thiol adduct. Positive regulator in the activation of the general stress transcription factor sigma-B. This Listeria innocua serovar 6a (strain ATCC BAA-680 / CLIP 11262) protein is Blue-light photoreceptor.